The following is a 312-amino-acid chain: Pantothenate kinase (312 aa).

97–104 lines the ATP pocket; it reads GSVAVGKS.

It belongs to the prokaryotic pantothenate kinase family.

It is found in the cytoplasm. It catalyses the reaction (R)-pantothenate + ATP = (R)-4'-phosphopantothenate + ADP + H(+). Its pathway is cofactor biosynthesis; coenzyme A biosynthesis; CoA from (R)-pantothenate: step 1/5. The protein is Pantothenate kinase of Mycobacterium marinum (strain ATCC BAA-535 / M).